The sequence spans 830 residues: LKQSKQPLESCRNRCNETFSEELSYCSCDNKCTERKACCWDYQDICVLPTQSWSCNKLRCGEKRMANVLCSCSEDCLTKKDCCTDYKSICKRETSWLKDQCASSSASQCPEGFDQSPLILFSMDGFRAEYLETWDTLMPNINKLKTCGTHAKYMRAVYPTKTFVNHYTIVTGLYAETHGIIDNNMYDVKLNQNFSLSGSNMRNAAWWGGQPIWHTASYQGLKAATYFWPGSEVKINGSYPTIYKVYNKSTPFEARVMEVLKWLDLPKAKRPDFSTLYIEEPDTTGHKFGPVSGQVIKSLQMADRTLGMLMEGLKQRNLHNCVNLILLADHGMEAISCNRLEYMTDYFNTVDFFMYEGAAPRIRSKNVPKDFYTFDSEAIVKKLTCRKPKQHFKAYLAKDLPKRLHFANNIRIDKVNLMVDRQWLAVRNKKYKYCSGGTHGYDNEFKSMEAIFLAHGPGFKEKTEVTSFENIEVYNLMCDLLKLKPAPNNGTHGSLNHLLKNPFYNPSPAKEQSPPLYCLFGPVPSPDVSGCKCSSITDLEAVNQRLNLIDQAKMQSEADNLPYGRPHVLQHSKYCLLHQTKYISAYSQDILMPLWNSYTISKSLVKPTSAPPSASDCLRLDVRIPTVQSQTCSNYQPDLAITPGFLYPPDFSSSGPEQYDALITSNIVPMYKEFARLWNYFHSTLLPKYATERNGLNVISGPIFDYNYDGHFDPYDTIDQYVNNTKIPIPTHYFVVLTSCENSTKTPLNCPPGSLKVLSFILPHRPDNSESCADKSPDNLWVEERMQTHTARVRDVELLTGLDFYSALKQPLSETLRLKTFLPIFINSVN.

2 SMB domains span residues 7–50 (PLES…VLPT) and 51–95 (QSWS…RETS). Cystine bridges form between Cys-11/Cys-15, Cys-11/Cys-28, Cys-15/Cys-46, Cys-26/Cys-28, Cys-26/Cys-39, Cys-32/Cys-38, Cys-39/Cys-46, Cys-55/Cys-60, Cys-55/Cys-72, Cys-60/Cys-90, Cys-70/Cys-72, Cys-70/Cys-83, Cys-76/Cys-82, Cys-83/Cys-90, Cys-101/Cys-147, and Cys-109/Cys-321. Asn-16 carries N-linked (GlcNAc...) asparagine glycosylation. Positions 35 to 37 (RKA) match the Cell attachment site motif. Residues Asp-124 and Thr-162 each coordinate a divalent metal cation. The active-site AMP-threonine intermediate is the Thr-162. 3 N-linked (GlcNAc...) asparagine glycosylation sites follow: Asn-193, Asn-236, and Asn-247. Lys-248 is an AMP binding site. A divalent metal cation-binding residues include Asp-282, His-286, Asp-329, and His-330. His-286 contributes to the AMP binding site. Intrachain disulfides connect Cys-337/Cys-434, Cys-385/Cys-772, Cys-518/Cys-575, Cys-531/Cys-632, Cys-533/Cys-617, and Cys-740/Cys-750. His-439 contacts a divalent metal cation. A glycan (N-linked (GlcNAc...) asparagine) is linked at Asn-489. Asn-723 and Asn-742 each carry an N-linked (GlcNAc...) asparagine glycan.

This sequence belongs to the nucleotide pyrophosphatase/phosphodiesterase family. In terms of assembly, monomer cleaved in two subunits; disulfide-linked. Is synthesized as a single-chain protein and is subsequently cleaved to form a two-subunit protein held together with disulfide bonds. A divalent metal cation is required as a cofactor. In terms of tissue distribution, expressed by venom gland.

It is found in the secreted. The catalysed reaction is ADP + H2O = AMP + phosphate + H(+). Functionally, hydrolyzes ADP with high activity. Shows weak or no activity on 5'-AMP, 5'-GMP, 3'-AMP, ATP, cAMP, and cGMP. Is devoid of monophosphatase and proteinase activities. Dose-dependently inhibits platelet aggregation induced by ADP and collagen. This chain is Venom phosphodiesterase, found in Naja atra (Chinese cobra).